The chain runs to 92 residues: Co-chaperonin GroES (92 aa).

Belongs to the GroES chaperonin family. Heptamer of 7 subunits arranged in a ring. Interacts with the chaperonin GroEL.

Its subcellular location is the cytoplasm. Together with the chaperonin GroEL, plays an essential role in assisting protein folding. The GroEL-GroES system forms a nano-cage that allows encapsulation of the non-native substrate proteins and provides a physical environment optimized to promote and accelerate protein folding. GroES binds to the apical surface of the GroEL ring, thereby capping the opening of the GroEL channel. This Thermotoga petrophila (strain ATCC BAA-488 / DSM 13995 / JCM 10881 / RKU-1) protein is Co-chaperonin GroES.